Reading from the N-terminus, the 99-residue chain is MAKGQSLQDPYLNALRRERIPVSIYLVNGIKLQGQIESFDQFVILLKNTVNQMVYKHAISTVVPARSVSHHNNNAQQQYQQQAAQAASAQSNETSSQAE.

The 60-residue stretch at 9-68 folds into the Sm domain; it reads DPYLNALRRERIPVSIYLVNGIKLQGQIESFDQFVILLKNTVNQMVYKHAISTVVPARSV. The segment at 67 to 99 is disordered; sequence SVSHHNNNAQQQYQQQAAQAASAQSNETSSQAE. A compositionally biased stretch (low complexity) spans 72–99; the sequence is NNNAQQQYQQQAAQAASAQSNETSSQAE.

This sequence belongs to the Hfq family. Homohexamer.

In terms of biological role, RNA chaperone that binds small regulatory RNA (sRNAs) and mRNAs to facilitate mRNA translational regulation in response to envelope stress, environmental stress and changes in metabolite concentrations. Also binds with high specificity to tRNAs. The protein is RNA-binding protein Hfq of Actinobacillus succinogenes (strain ATCC 55618 / DSM 22257 / CCUG 43843 / 130Z).